The sequence spans 1408 residues: MKDLLGFLKKQNVSSDFDTIKVTLASPEKIRSWSFGEVKKPETINYRTFKPERDGLFCAKIFGPIRDYECLCGKYKRLKHRGVICEKCGVEVTQSKVRRERMGHIDLATSVAHIWFLKSLPSRIGLMLDMTLKEIEAVLYFEAFMVVDPGLTPLEPWQLLSEEEYLDAMDEYGDEFEAQMGAEAIKKMLQAIDLDAEATRLREEMEATSSETKQKKISKRLKLIDSFVQSGNKPEWMILDVLPVLPPELRPLVPLDGGRFATSDLNDLYRRVINRNNRLKRLLDLMAPDIIVRNEKRMLQESVDSMLDNGRRGRAVTGTNKRQLKSLADMIKGKQGRFRQNLLGKRVDYSGRSVIVVGPSLRLHQCGLPKKMALELFKPFIFSKLQKRGLATTIKAAKKMVEQGLPEVWDVLDEVIREHPVLLNRAPTLHRLGIQAFEPVLIEGKAINLHPLVCSAFNADFDGDQMAVHVPLSLEAQLEARTLMMSTNNLLSPANGDPIIVPSQDVVLGLYYITREKINAKGEGKAFSNWMEVQRALDAKAVHVHTKIKLKIEETVIDDAGVETVKKGIVDTTVGRALLLRILPKGLGFDLLNLNLTKKNISKALNACYRILGPKETVIFADQLMYAGFKWSTLAGLSFCSDDMLIPDDKAPIIERADEQVTEIQRQFAQGLVTEGERYNKVVDIWSHTNELVTKSMMEELQYETVTDAEGNEVKQTSFNSVYMMADSGARGSVAQMRQLGGMRGLMAKPDGSIIETPITANFREGLNVLQYFISTHGARKGLADTALKTANSGYLTRRLVDVAQDVVVTEPDCGTDASITMAPHVEGGEVVEELKERILGRVVAEDVAGLDGEIIVEKGTLLDERLVNLIDESGVDAVKVHSPITCETKFGICQKCYGRDLARGHMVNLGEAVGVMAAQSIGEPGTQLTMRTFHIGGTASASTAQSQVEVKHEGKVKFDNLKTIKNTENQVVVTSRSGEISILDSLGREKERYKIPYGSMLNVKDGIDVTSGNVLATWDAHTHPIITEAEGIIQFGNFDGAVEEHVDELTGLTTHVVKSSKERSSATKELRPYIQLVDDKGEVVPFPGTQTPAMYYLPENSVVVVNQSDKVGAGDILARIPQESSKTKDITGGLPRVADLFEARVPKEPAIMAEVSGVVGFGKETKGKQRLVITQDSGEQHETLIPKWRSVDVFEGERVEKGDVVVDGNPNPHDILRLLGVERLTKYIVDEVQDVYRLQGVRINDKHIETVVRQMLRKVEVRSTGDTSLIKGEQAEFARVLEMNEKVSDEGSVEASYQRVLLGITKASLATESFISAASFQETTRVLTEAAVSGKEDKLVGLKENVIVGRLIPAGTGFAYHKARKEASEKTQRELAAFMNTDDESAVQEEVVEETISVTESVEQTTE.

Zn(2+)-binding residues include Cys70, Cys72, Cys85, and Cys88. Residues Asp460, Asp462, and Asp464 each coordinate Mg(2+). Zn(2+) contacts are provided by Cys814, Cys887, Cys894, and Cys897.

The protein belongs to the RNA polymerase beta' chain family. As to quaternary structure, the RNAP catalytic core consists of 2 alpha, 1 beta, 1 beta' and 1 omega subunit. When a sigma factor is associated with the core the holoenzyme is formed, which can initiate transcription. The cofactor is Mg(2+). Zn(2+) is required as a cofactor.

The enzyme catalyses RNA(n) + a ribonucleoside 5'-triphosphate = RNA(n+1) + diphosphate. DNA-dependent RNA polymerase catalyzes the transcription of DNA into RNA using the four ribonucleoside triphosphates as substrates. The chain is DNA-directed RNA polymerase subunit beta' from Hydrogenovibrio crunogenus (strain DSM 25203 / XCL-2) (Thiomicrospira crunogena).